The sequence spans 375 residues: L-asparaginase 2 (375 aa).

An N-terminal signal peptide occupies residues 1–19; sequence MKKQRMLVLFTALLFVFTG. The interval 22 to 46 is disordered; the sequence is HSPETKESPKEKAQTQKVSSASASE. The span at 24-35 shows a compositional bias: basic and acidic residues; that stretch reads PETKESPKEKAQ. An Asparaginase/glutaminase domain is found at 51 to 375; the sequence is PNIRILATGG…QKIQAYFNEY (325 aa). Catalysis depends on Thr-61, which acts as the O-isoaspartyl threonine intermediate. Substrate-binding positions include Ser-108 and 141–142; that span reads TD.

This sequence belongs to the asparaginase 1 family. Homotetramer.

The catalysed reaction is L-asparagine + H2O = L-aspartate + NH4(+). In terms of biological role, catalyzes the conversion of L-asparagine to L-aspartate and ammonium. The protein is L-asparaginase 2 (ansZ) of Bacillus subtilis (strain 168).